The sequence spans 619 residues: Dihydroxy-acid dehydratase (619 aa).

Residue Asp-81 coordinates Mg(2+). Position 122 (Cys-122) interacts with [2Fe-2S] cluster. Residues Asp-123 and Lys-124 each contribute to the Mg(2+) site. Lys-124 is subject to N6-carboxylysine. Cys-201 contacts [2Fe-2S] cluster. A Mg(2+)-binding site is contributed by Glu-496. Ser-522 functions as the Proton acceptor in the catalytic mechanism.

This sequence belongs to the IlvD/Edd family. As to quaternary structure, homodimer. [2Fe-2S] cluster serves as cofactor. Mg(2+) is required as a cofactor.

It catalyses the reaction (2R)-2,3-dihydroxy-3-methylbutanoate = 3-methyl-2-oxobutanoate + H2O. The enzyme catalyses (2R,3R)-2,3-dihydroxy-3-methylpentanoate = (S)-3-methyl-2-oxopentanoate + H2O. It functions in the pathway amino-acid biosynthesis; L-isoleucine biosynthesis; L-isoleucine from 2-oxobutanoate: step 3/4. It participates in amino-acid biosynthesis; L-valine biosynthesis; L-valine from pyruvate: step 3/4. Functions in the biosynthesis of branched-chain amino acids. Catalyzes the dehydration of (2R,3R)-2,3-dihydroxy-3-methylpentanoate (2,3-dihydroxy-3-methylvalerate) into 2-oxo-3-methylpentanoate (2-oxo-3-methylvalerate) and of (2R)-2,3-dihydroxy-3-methylbutanoate (2,3-dihydroxyisovalerate) into 2-oxo-3-methylbutanoate (2-oxoisovalerate), the penultimate precursor to L-isoleucine and L-valine, respectively. This is Dihydroxy-acid dehydratase from Burkholderia vietnamiensis (strain G4 / LMG 22486) (Burkholderia cepacia (strain R1808)).